The following is a 778-amino-acid chain: Ral guanine nucleotide dissociation stimulator-like 2 (778 aa).

Low complexity predominate over residues Met1–Pro15. The disordered stretch occupies residues Met1 to Asp59. The segment covering Asp33–Gly42 has biased composition (gly residues). The segment covering Gln43 to Asp59 has biased composition (acidic residues). The N-terminal Ras-GEF domain occupies Ser88–Arg212. The 271-residue stretch at Leu243 to Pro513 folds into the Ras-GEF domain. Disordered regions lie at residues Ser503–Pro524, Gly541–Ala564, Ser581–Ser647, and Arg735–Thr769. The span at Ser581–Leu592 shows a compositional bias: low complexity. Polar residues predominate over residues Cys620–Thr632. The Ras-associating domain occupies Asp649–Arg736. Positions Ser738 to Ser756 are enriched in low complexity.

In terms of assembly, interacts with SAMD9.

Probable guanine nucleotide exchange factor. Putative effector of Ras and/or Rap. Associates with the GTP-bound form of Rap 1A and H-Ras in vitro. This is Ral guanine nucleotide dissociation stimulator-like 2 (Rgl2) from Mus musculus (Mouse).